Here is a 367-residue protein sequence, read N- to C-terminus: Innexin inx4 (367 aa).

At 1–21 (MYAAVKPLSKYLQFKSVHIYD) the chain is on the cytoplasmic side. A helical transmembrane segment spans residues 22 to 42 (AIFTLHSKVTVALLLACTFLL). Topologically, residues 43 to 110 (SSKQYFGDPI…PENRNYITYY (68 aa)) are extracellular. Residues 111 to 131 (QWVVLVLLLESFVFYMPAFLW) form a helical membrane-spanning segment. Topologically, residues 132–186 (KIWEGGRLKHLCDDFHKMAVCKDKSRTHLRVLVNYFSSDYKETHFRYFVSYVFCE) are cytoplasmic. Residues 187-207 (ILNLSISILNFLLLDVFFGGF) traverse the membrane as a helical segment. The Extracellular segment spans residues 208-268 (WGRYRNALLS…LLPLNILNEK (61 aa)). Residues 269 to 289 (IFAFLWIWFILVAMLISLKFL) form a helical membrane-spanning segment. The Cytoplasmic portion of the chain corresponds to 290–367 (YRLATVLYPG…IKIPPGADKI (78 aa)).

It belongs to the pannexin family. In terms of tissue distribution, expressed in nurse cells and oocyte during oogenesis. Uniform expression in imaginal wing disk and low expression in developing imaginal CNS. Expressed in embryonic pole cells and primordial germ cells.

The protein localises to the cell membrane. The protein resides in the cell junction. Its subcellular location is the gap junction. Structural component of the gap junctions in germline cells. Required for differentiation and survival of germline cysts in females and of spermatogonia in males; gap junctional communication between spermatogonia and somatic cyst cells may be required for normal differentiation and survival of spermatogonia. The polypeptide is Innexin inx4 (zpg) (Drosophila melanogaster (Fruit fly)).